Here is a 315-residue protein sequence, read N- to C-terminus: Putative heme-binding peroxidase (315 aa).

Residue histidine 40 is the Proton acceptor of the active site. Histidine 169 provides a ligand contact to heme b. Tryptophan 185 serves as the catalytic Tryptophan radical intermediate. Residues glutamate 267 to valine 286 form a disordered region.

Belongs to the peroxidase family. Cytochrome c peroxidase subfamily. It depends on heme b as a cofactor.

Its function is as follows. Destroys radicals which are normally produced within the cells and which are toxic to biological systems. The polypeptide is Putative heme-binding peroxidase (Cryptococcus neoformans var. neoformans serotype D (strain B-3501A) (Filobasidiella neoformans)).